The chain runs to 290 residues: Ribosomal RNA small subunit methyltransferase H (290 aa).

S-adenosyl-L-methionine contacts are provided by residues 35–37, aspartate 54, phenylalanine 81, aspartate 97, and glutamine 104; that span reads GGH.

Belongs to the methyltransferase superfamily. RsmH family.

It localises to the cytoplasm. It carries out the reaction cytidine(1402) in 16S rRNA + S-adenosyl-L-methionine = N(4)-methylcytidine(1402) in 16S rRNA + S-adenosyl-L-homocysteine + H(+). Specifically methylates the N4 position of cytidine in position 1402 (C1402) of 16S rRNA. In Picosynechococcus sp. (strain ATCC 27264 / PCC 7002 / PR-6) (Agmenellum quadruplicatum), this protein is Ribosomal RNA small subunit methyltransferase H.